We begin with the raw amino-acid sequence, 497 residues long: Cytochrome P450 2D6 (497 aa).

Aspartate 301 is a substrate binding site. Cysteine 443 lines the heme pocket.

This sequence belongs to the cytochrome P450 family. Heme serves as cofactor.

It localises to the endoplasmic reticulum membrane. It is found in the microsome membrane. The catalysed reaction is (5Z,8Z,11Z,14Z)-eicosatetraenoate + reduced [NADPH--hemoprotein reductase] + O2 = (8R,9S)-epoxy-(5Z,11Z,14Z)-eicosatrienoate + oxidized [NADPH--hemoprotein reductase] + H2O + H(+). It carries out the reaction (5Z,8Z,11Z,14Z)-eicosatetraenoate + reduced [NADPH--hemoprotein reductase] + O2 = (11R,12S)-epoxy-(5Z,8Z,14Z)-eicosatrienoate + oxidized [NADPH--hemoprotein reductase] + H2O + H(+). The enzyme catalyses (5Z,8Z,11Z,14Z)-eicosatetraenoate + reduced [NADPH--hemoprotein reductase] + O2 = (14S,15R)-epoxy-(5Z,8Z,11Z)-eicosatrienoate + oxidized [NADPH--hemoprotein reductase] + H2O + H(+). It catalyses the reaction N-(5Z,8Z,11Z,14Z-eicosatetraenoyl)-ethanolamine + reduced [NADPH--hemoprotein reductase] + O2 = N-(8,9-epoxy-5Z,11Z,14Z-eicosatrienoyl)-ethanolamine + oxidized [NADPH--hemoprotein reductase] + H2O + H(+). The catalysed reaction is N-(5Z,8Z,11Z,14Z-eicosatetraenoyl)-ethanolamine + reduced [NADPH--hemoprotein reductase] + O2 = N-(11,12-epoxy-5Z,8Z,14Z-eicosatrienoyl)-ethanolamine + oxidized [NADPH--hemoprotein reductase] + H2O + H(+). It carries out the reaction N-(5Z,8Z,11Z,14Z-eicosatetraenoyl)-ethanolamine + reduced [NADPH--hemoprotein reductase] + O2 = N-(14,15-epoxy-5Z,8Z,11Z-eicosatrienoyl)-ethanolamine + oxidized [NADPH--hemoprotein reductase] + H2O + H(+). The enzyme catalyses N-(5Z,8Z,11Z,14Z-eicosatetraenoyl)-ethanolamine + reduced [NADPH--hemoprotein reductase] + O2 = N-(20-hydroxy-5Z,8Z,11Z,14Z-eicosatetraenoyl)-ethanolamine + oxidized [NADPH--hemoprotein reductase] + H2O + H(+). It catalyses the reaction (5Z,8Z,11Z,14Z,17Z)-eicosapentaenoate + reduced [NADPH--hemoprotein reductase] + O2 = (17S,18R)-epoxy-(5Z,8Z,11Z,14Z)-eicosatetraenoate + oxidized [NADPH--hemoprotein reductase] + H2O + H(+). The catalysed reaction is (4Z,7Z,10Z,13Z,16Z,19Z)-docosahexaenoate + reduced [NADPH--hemoprotein reductase] + O2 = (19R,20S)-epoxy-(4Z,7Z,10Z,13Z,16Z)-docosapentaenoate + oxidized [NADPH--hemoprotein reductase] + H2O + H(+). It carries out the reaction (4Z,7Z,10Z,13Z,16Z,19Z)-docosahexaenoate + reduced [NADPH--hemoprotein reductase] + O2 = (19S,20R)-epoxy-(4Z,7Z,10Z,13Z,16Z)-docosapentaenoate + oxidized [NADPH--hemoprotein reductase] + H2O + H(+). The enzyme catalyses cholesterol + reduced [NADPH--hemoprotein reductase] + O2 = 25-hydroxycholesterol + oxidized [NADPH--hemoprotein reductase] + H2O + H(+). It catalyses the reaction all-trans-retinol + reduced [NADPH--hemoprotein reductase] + O2 = all-trans-retinal + oxidized [NADPH--hemoprotein reductase] + 2 H2O + H(+). It functions in the pathway cofactor metabolism; retinol metabolism. Its pathway is lipid metabolism; fatty acid metabolism. It participates in steroid metabolism; cholesterol metabolism. A cytochrome P450 monooxygenase involved in the metabolism of fatty acids, steroids and retinoids. Mechanistically, uses molecular oxygen inserting one oxygen atom into a substrate, and reducing the second into a water molecule, with two electrons provided by NADPH via cytochrome P450 reductase (NADPH--hemoprotein reductase). Catalyzes the epoxidation of double bonds of polyunsaturated fatty acids (PUFA). Metabolizes endocannabinoid arachidonoylethanolamide (anandamide) to 20-hydroxyeicosatetraenoic acid ethanolamide (20-HETE-EA) and 8,9-, 11,12-, and 14,15-epoxyeicosatrienoic acid ethanolamides (EpETrE-EAs), potentially modulating endocannabinoid system signaling. Catalyzes the hydroxylation of carbon-hydrogen bonds. Metabolizes cholesterol toward 25-hydroxycholesterol, a physiological regulator of cellular cholesterol homeostasis. Catalyzes the oxidative transformations of all-trans retinol to all-trans retinal, a precursor for the active form all-trans-retinoic acid. Also involved in the oxidative metabolism of drugs such as antiarrhythmics, adrenoceptor antagonists, and tricyclic antidepressants. This chain is Cytochrome P450 2D6, found in Homo sapiens (Human).